We begin with the raw amino-acid sequence, 423 residues long: Growth hormone-releasing hormone receptor (423 aa).

A signal peptide spans 1-22 (MDGLMWATRILCLLSLCGVTLG). Topologically, residues 23–130 (HLHLECDFIT…KEKSYFSTVK (108 aa)) are extracellular. 3 disulfide bridges follow: Cys41-Cys64, Cys55-Cys96, and Cys78-Cys112. Residues Asn49 and Asn50 are each glycosylated (N-linked (GlcNAc...) asparagine). The chain crosses the membrane as a helical span at residues 131 to 151 (IIYTTGHSISIVALCVAIAIL). Residues 152-167 (VALRRLHCPRNYIHTQ) are Cytoplasmic-facing. Residues 168–188 (LFATFILKASAVFLKDAAIFQ) traverse the membrane as a helical segment. Topologically, residues 189–210 (GDSTDHCSMSTVLCKVSVAISH) are extracellular. Residues 211 to 231 (LATMTNFSWLLAEAVYLSCLL) form a helical membrane-spanning segment. Residues 232–240 (ASTSPRSKP) are Cytoplasmic-facing. Residues 241-261 (AFWWLVLAGWGLPVLCTGTWV) form a helical membrane-spanning segment. Residues 262 to 283 (GCKLAFEDTECWDLDNSSPCWW) lie on the Extracellular side of the membrane. A helical transmembrane segment spans residues 284-304 (IIKGPIVLSVGVNFGLFLNII). Topologically, residues 305–331 (CILLRKLEPAQGGLHTRAQYWRLSKST) are cytoplasmic. A helical transmembrane segment spans residues 332-352 (LLLIPLFGIHYIIFNFLPDSA). Residues 353 to 357 (GLDIR) are Extracellular-facing. A helical transmembrane segment spans residues 358 to 378 (VPLELGLGSFQGFIVAVLYCF). The Cytoplasmic portion of the chain corresponds to 379–423 (LNQEVRTEISRKWYGHDPELLPARRTCTEWTTPPRSRLKVLTSEC).

The protein belongs to the G-protein coupled receptor 2 family. As to expression, pituitary gland.

Its subcellular location is the cell membrane. Its function is as follows. Receptor for GRF, coupled to G proteins which activate adenylyl cyclase. Stimulates somatotroph cell growth, growth hormone gene transcription and growth hormone secretion. This Mus musculus (Mouse) protein is Growth hormone-releasing hormone receptor (Ghrhr).